A 101-amino-acid chain; its full sequence is Small ribosomal subunit protein bS6 (101 aa).

Belongs to the bacterial ribosomal protein bS6 family.

Its function is as follows. Binds together with bS18 to 16S ribosomal RNA. This chain is Small ribosomal subunit protein bS6, found in Nitratidesulfovibrio vulgaris (strain ATCC 29579 / DSM 644 / CCUG 34227 / NCIMB 8303 / VKM B-1760 / Hildenborough) (Desulfovibrio vulgaris).